A 263-amino-acid chain; its full sequence is Auxin-responsive protein IAA3 (263 aa).

2 disordered regions span residues Met1–Ala54 and Arg76–Lys121. The segment covering Arg28 to Glu38 has biased composition (basic and acidic residues). Residues Leu39–Leu43 carry the EAR-like (transcriptional repression) motif. The region spanning Phe158 to Gly245 is the PB1 domain.

It belongs to the Aux/IAA family. As to quaternary structure, homodimers and heterodimers. As to expression, highly expressed in flowers. Expressed in roots and shoots.

It is found in the nucleus. Its function is as follows. Aux/IAA proteins are short-lived transcriptional factors that function as repressors of early auxin response genes at low auxin concentrations. This Oryza sativa subsp. japonica (Rice) protein is Auxin-responsive protein IAA3 (IAA3).